The sequence spans 472 residues: Ribulose bisphosphate carboxylase large chain 1 (472 aa).

Substrate-binding residues include asparagine 115 and threonine 165. The active-site Proton acceptor is lysine 167. Lysine 169 is a substrate binding site. Mg(2+) contacts are provided by lysine 193, aspartate 195, and glutamate 196. At lysine 193 the chain carries N6-carboxylysine. The active-site Proton acceptor is histidine 286. Substrate-binding residues include arginine 287, histidine 319, and serine 371.

It belongs to the RuBisCO large chain family. Type I subfamily. As to quaternary structure, heterohexadecamer of 8 large chains and 8 small chains. Requires Mg(2+) as cofactor.

It catalyses the reaction 2 (2R)-3-phosphoglycerate + 2 H(+) = D-ribulose 1,5-bisphosphate + CO2 + H2O. The enzyme catalyses D-ribulose 1,5-bisphosphate + O2 = 2-phosphoglycolate + (2R)-3-phosphoglycerate + 2 H(+). Its function is as follows. RuBisCO catalyzes two reactions: the carboxylation of D-ribulose 1,5-bisphosphate, the primary event in carbon dioxide fixation, as well as the oxidative fragmentation of the pentose substrate. Both reactions occur simultaneously and in competition at the same active site. This Allochromatium vinosum (strain ATCC 17899 / DSM 180 / NBRC 103801 / NCIMB 10441 / D) (Chromatium vinosum) protein is Ribulose bisphosphate carboxylase large chain 1.